The following is a 258-amino-acid chain: Archaerhodopsin-3 (258 aa).

Residues 1–6 (MDPIAL) constitute a propeptide that is removed on maturation. Residue Gln7 is modified to Pyrrolidone carboxylic acid. Topologically, residues 7-18 (QAGYDLLGDGRP) are extracellular. Residues 19 to 40 (ETLWLGIGTLLMLIGTFYFLVR) traverse the membrane as a helical segment. The Cytoplasmic portion of the chain corresponds to 41–49 (GWGVTDKDA). A helical membrane pass occupies residues 50–71 (REYYAVTILVPGIASAAYLSMF). The Extracellular segment spans residues 72–89 (FGIGLTEVTVGGEMLDIY). The helical transmembrane segment at 90-111 (YARYADWLFTTPLLLLDLALLA) threads the bilayer. Over 112 to 114 (KVD) the chain is Cytoplasmic. A helical membrane pass occupies residues 115–137 (RVTIGTLVGVDALMIVTGLIGAL). At 138-141 (SHTA) the chain is on the extracellular side. Residues 142-170 (IARYSWWLFSTICMIVVLYFLATSLRSAA) form a helical membrane-spanning segment. Residues 171-173 (KER) lie on the Cytoplasmic side of the membrane. The chain crosses the membrane as a helical span at residues 174-202 (GPEVASTFNTLTALVLVLWTAYPILWIIG). The Extracellular portion of the chain corresponds to 203–210 (TEGAGVVG). A helical membrane pass occupies residues 211 to 243 (LGIETLLFMVLDVTAKVGFGFILLRSRAILGDT). The residue at position 226 (Lys226) is an N6-(retinylidene)lysine. Over 244-258 (EAPEPSAGADVSAAD) the chain is Cytoplasmic.

Belongs to the archaeal/bacterial/fungal opsin family.

It localises to the cell membrane. In terms of biological role, light-driven proton pump. This chain is Archaerhodopsin-3 (aop3), found in Halorubrum sodomense.